Reading from the N-terminus, the 262-residue chain is Type III pantothenate kinase (262 aa).

6-13 (DAGNTNMV) serves as a coordination point for ATP. Substrate is bound by residues Y100 and 107 to 110 (GADR). D109 acts as the Proton acceptor in catalysis. D129 is a binding site for K(+). T132 lines the ATP pocket. T184 serves as a coordination point for substrate.

Belongs to the type III pantothenate kinase family. Homodimer. Requires NH4(+) as cofactor. K(+) serves as cofactor.

The protein localises to the cytoplasm. The enzyme catalyses (R)-pantothenate + ATP = (R)-4'-phosphopantothenate + ADP + H(+). The protein operates within cofactor biosynthesis; coenzyme A biosynthesis; CoA from (R)-pantothenate: step 1/5. In terms of biological role, catalyzes the phosphorylation of pantothenate (Pan), the first step in CoA biosynthesis. The protein is Type III pantothenate kinase of Clostridium tetani (strain Massachusetts / E88).